Consider the following 413-residue polypeptide: MSVVEQAQRARTAAAALAVATRADKDAALHAMADALVARTSEILAANGADLAAGRDEGLSTAILDRLALDAGRVADIADALRQMAALPDPTGEVVRGSTLPNGLQLRQIRVPFGVVGIIYEARPNVTVDAAGICLKSGNAVLLRGSSSAARSNVALVSVLRDAVAGTGLPADSVQLLDATTRDSVKELMRARGLVDVLIPRGGAALIRTVVEEATVPVIETGVGNCHVYVDAAADVSKAVAIALNAKTQRLSTCNTAESLLVHTAVADAVLPPALAAFAAAGVTVHGCPQVARHSTAVLPATDEDYATEYLSADISVAVVESLDAAVAHIQRYGTGHTEAIVTDSQSAAREFVARVDAAAVMVNASTRFTDGGEFGFGAEIGISTQKLHARGPMGLPELTSTKYVVTGDGQLR.

This sequence belongs to the gamma-glutamyl phosphate reductase family.

It localises to the cytoplasm. The catalysed reaction is L-glutamate 5-semialdehyde + phosphate + NADP(+) = L-glutamyl 5-phosphate + NADPH + H(+). The protein operates within amino-acid biosynthesis; L-proline biosynthesis; L-glutamate 5-semialdehyde from L-glutamate: step 2/2. In terms of biological role, catalyzes the NADPH-dependent reduction of L-glutamate 5-phosphate into L-glutamate 5-semialdehyde and phosphate. The product spontaneously undergoes cyclization to form 1-pyrroline-5-carboxylate. The chain is Gamma-glutamyl phosphate reductase from Salinispora tropica (strain ATCC BAA-916 / DSM 44818 / JCM 13857 / NBRC 105044 / CNB-440).